We begin with the raw amino-acid sequence, 417 residues long: NADH-quinone oxidoreductase subunit D (417 aa).

Belongs to the complex I 49 kDa subunit family. NDH-1 is composed of 14 different subunits. Subunits NuoB, C, D, E, F, and G constitute the peripheral sector of the complex.

It is found in the cell inner membrane. The catalysed reaction is a quinone + NADH + 5 H(+)(in) = a quinol + NAD(+) + 4 H(+)(out). Functionally, NDH-1 shuttles electrons from NADH, via FMN and iron-sulfur (Fe-S) centers, to quinones in the respiratory chain. The immediate electron acceptor for the enzyme in this species is believed to be ubiquinone. Couples the redox reaction to proton translocation (for every two electrons transferred, four hydrogen ions are translocated across the cytoplasmic membrane), and thus conserves the redox energy in a proton gradient. This Dechloromonas aromatica (strain RCB) protein is NADH-quinone oxidoreductase subunit D.